A 167-amino-acid polypeptide reads, in one-letter code: N-alpha-acetyltransferase (167 aa).

Residues 12-167 (YRIRNARLTD…EDAYLMAAPL (156 aa)) enclose the N-acetyltransferase domain. Residue Y37 coordinates substrate. Residue H88 coordinates Zn(2+). Acetyl-CoA-binding positions include 92–94 (IAV) and 100–105 (RLGIGT). E127 provides a ligand contact to Zn(2+). Residues N132 and 139 to 141 (YKK) contribute to the acetyl-CoA site. Y154 serves as a coordination point for substrate.

Belongs to the acetyltransferase family. ARD1 subfamily. Homodimer.

The protein localises to the cytoplasm. The enzyme catalyses N-terminal L-alanyl-[protein] + acetyl-CoA = N-terminal N(alpha)-acetyl-L-alanyl-[protein] + CoA + H(+). It carries out the reaction N-terminal L-seryl-[protein] + acetyl-CoA = N-terminal N(alpha)-acetyl-L-seryl-[protein] + CoA + H(+). It catalyses the reaction N-terminal L-methionyl-L-leucyl-[protein] + acetyl-CoA = N-terminal N(alpha)-acetyl-L-methionyl-L-leucyl-[protein] + CoA + H(+). The catalysed reaction is N-terminal L-methionyl-L-glutamyl-[protein] + acetyl-CoA = N-terminal N(alpha)-acetyl-L-methionyl-L-glutamyl-[protein] + CoA + H(+). Functionally, displays alpha (N-terminal) acetyltransferase activity. Catalyzes the covalent attachment of an acetyl moiety from acetyl-CoA to the free alpha-amino group at the N-terminus of a protein. This Sulfurisphaera tokodaii (strain DSM 16993 / JCM 10545 / NBRC 100140 / 7) (Sulfolobus tokodaii) protein is N-alpha-acetyltransferase.